Here is a 154-residue protein sequence, read N- to C-terminus: Troponin C, isoform 1 (154 aa).

EF-hand domains lie at 8-43 (EQTA…LGHQ), 44-79 (LDDA…FLVE), 84-119 (AMMA…LDDK), and 120-154 (LTND…GGDD). Ca(2+) contacts are provided by D57, D59, S61, Q63, and E68. The Ca(2+) site is built by D133, D135, S137, T139, and E144.

The protein belongs to the troponin C family. In terms of tissue distribution, present only in adult muscles.

The sequence is that of Troponin C, isoform 1 (TpnC41C) from Drosophila melanogaster (Fruit fly).